We begin with the raw amino-acid sequence, 94 residues long: MSLADFMEQRVQVITNDGRVVLGSLKGFDHTTNLILSDSFERIISMDQDMETIPLGVYLLRGENVAMVGLVNEELDSEIEWTKIRGEAIPDVVH.

In terms of domain architecture, Sm spans 1-74; the sequence is MSLADFMEQR…VAMVGLVNEE (74 aa).

Belongs to the snRNP Sm proteins family. In terms of assembly, component of the heptameric LSM2-LSM8 complex that forms a seven-membered ring structure with a donut shape. The LSm subunits are arranged in the order lsm8, lsm2, lsm3, lsm6, lsm5, lsm7 and lsm4.

The protein resides in the nucleus. The protein localises to the cytoplasm. In terms of biological role, component of the nuclear LSM2-LSM8 complex, which is involved in spliceosome assembly. The LSM2-LSM8 complex plays a role in the biogenesis of the spliceosomal U4/U6-U5 tri-snRNP complex by accelerating prp24-mediated annealing of U4/U6 di-snRNA. The LSM2-LSM8 complex binds U6 snRNA terminating with a cyclic 2',3' phosphate group; RNA with an unmodified 3' hydroxyl or non-cyclic 3' phosphate is bound less tightly. This is LSM2-LSM8 complex subunit lsm8 (lsm8) from Schizosaccharomyces pombe (strain 972 / ATCC 24843) (Fission yeast).